The chain runs to 206 residues: Urease accessory protein UreG (206 aa).

13–20 (GPVGSGKT) is a binding site for GTP.

The protein belongs to the SIMIBI class G3E GTPase family. UreG subfamily. In terms of assembly, homodimer. UreD, UreF and UreG form a complex that acts as a GTP-hydrolysis-dependent molecular chaperone, activating the urease apoprotein by helping to assemble the nickel containing metallocenter of UreC. The UreE protein probably delivers the nickel.

The protein localises to the cytoplasm. Functionally, facilitates the functional incorporation of the urease nickel metallocenter. This process requires GTP hydrolysis, probably effectuated by UreG. This is Urease accessory protein UreG from Natronomonas pharaonis (strain ATCC 35678 / DSM 2160 / CIP 103997 / JCM 8858 / NBRC 14720 / NCIMB 2260 / Gabara) (Halobacterium pharaonis).